The following is a 1553-amino-acid chain: DNA topoisomerase 2-alpha (1553 aa).

The disordered stretch occupies residues Met-1–Ala-25. Over residues Pro-12–Ala-25 the composition is skewed to basic and acidic residues. ATP is bound by residues Asn-92, Asn-121, Ser-149–Asn-151, and Gly-162–Lys-169. The segment at Lys-343 to Lys-345 is interaction with DNA. ATP is bound at residue Gln-377–Lys-379. A Toprim domain is found at Cys-456–Glu-573. Mg(2+) contacts are provided by Glu-462, Asp-542, and Asp-544. A Topo IIA-type catalytic domain is found at Ile-716–Leu-1163. Tyr-806 acts as the O-(5'-phospho-DNA)-tyrosine intermediate in catalysis. The interaction with DNA stretch occupies residues Lys-991–Ser-1000. 2 disordered regions span residues Gln-1095 to Gly-1114 and Thr-1186 to Phe-1553. Residues Glu-1098 to Glu-1107 show a composition bias toward acidic residues. Over residues Ser-1242–Ser-1262 the composition is skewed to basic and acidic residues. Acidic residues-rich tracts occupy residues Ser-1300–Glu-1310 and Ser-1334–Glu-1349. The segment covering Val-1371–Leu-1385 has biased composition (basic and acidic residues). Over residues Pro-1413–Lys-1432 the composition is skewed to low complexity. Residues Lys-1444–Arg-1454 show a composition bias toward basic residues. The segment covering Ser-1517–Thr-1532 has biased composition (low complexity).

It belongs to the type II topoisomerase family. As to quaternary structure, homodimer. It depends on Mg(2+) as a cofactor. Mn(2+) is required as a cofactor. The cofactor is Ca(2+).

It localises to the cytoplasm. Its subcellular location is the nucleus. The protein localises to the nucleoplasm. The protein resides in the nucleolus. The enzyme catalyses ATP-dependent breakage, passage and rejoining of double-stranded DNA.. Its function is as follows. Key decatenating enzyme that alters DNA topology by binding to two double-stranded DNA molecules, generating a double-stranded break in one of the strands, passing the intact strand through the broken strand, and religating the broken strand. May play a role in the regulation of circadian rhythm. In Gallus gallus (Chicken), this protein is DNA topoisomerase 2-alpha (TOP2A).